The following is a 155-amino-acid chain: MSESCPCCSGLQYNACCQPYLTHAATAAEPAVLMRSRYTAYVKHDVDYLIATWHPDLQPEKWRASLAESCQNSQWLGLTILATSPGKTPDEGYVEFAARYISETDSQRTEVMRERSRFLRQHNRWYYIDGVHVQTGRNEPCPCDSGKKYKKCCGQ.

The protein belongs to the UPF0225 family.

The sequence is that of UPF0225 protein PC1_1977 from Pectobacterium carotovorum subsp. carotovorum (strain PC1).